The sequence spans 554 residues: Hydroxylamine reductase (554 aa).

4 residues coordinate [2Fe-2S] cluster: Cys3, Cys6, Cys18, and Cys25. Hybrid [4Fe-2O-2S] cluster is bound by residues His252, Glu276, Cys320, Cys408, Cys436, Cys461, Glu495, and Lys497. Cys408 is modified (cysteine persulfide).

The protein belongs to the HCP family. Requires [2Fe-2S] cluster as cofactor. Hybrid [4Fe-2O-2S] cluster is required as a cofactor.

Its subcellular location is the cytoplasm. The catalysed reaction is A + NH4(+) + H2O = hydroxylamine + AH2 + H(+). Catalyzes the reduction of hydroxylamine to form NH(3) and H(2)O. The sequence is that of Hydroxylamine reductase from Shewanella loihica (strain ATCC BAA-1088 / PV-4).